The primary structure comprises 308 residues: Putative mitochondrial transporter UCP3 (308 aa).

At 1 to 10 the chain is on the mitochondrial intermembrane side; it reads MVGLQPSEVP. Residues 11-32 form a helical membrane-spanning segment; sequence PTTVVKFLGAGTAACFADLLTF. Solcar repeat units follow at residues 11–102, 111–202, and 211–296; these read PTTV…VKQF, SSVA…IKEK, and DNFP…LKRA. Over 33 to 73 the chain is Mitochondrial matrix; it reads PLDTAKVRLQIQGENPGVQSVQYRGVLGTILTMVRTEGPRS. The chain crosses the membrane as a helical span at residues 74-96; the sequence is PYSGLVAGLHRQMSFASIRIGLY. Over 97 to 116 the chain is Mitochondrial intermembrane; it reads DSVKQFYTPKGTDHSSVAIR. The chain crosses the membrane as a helical span at residues 117–133; that stretch reads ILAGCTTGAMAVTCAQP. Residues 134–179 are Mitochondrial matrix-facing; that stretch reads TDVVKVRFQAMIRLGTGGERKYRGTMDAYRTIAREEGVRGLWKGTW. A helical membrane pass occupies residues 180 to 196; that stretch reads PNITRNAIVNCAEMVTY. At 197–213 the chain is on the mitochondrial intermembrane side; the sequence is DIIKEKLLDSHLFTDNF. The chain crosses the membrane as a helical span at residues 214 to 233; the sequence is PCHFVSAFGAGFCATVVASP. Topologically, residues 234 to 267 are mitochondrial matrix; that stretch reads VDVVKTRYMNAPPGRYRSPLHCMLRMVAQEGPTA. The helical transmembrane segment at 268–290 threads the bilayer; the sequence is FYKGFMPSFLRLGSWNVMMFVTY. Positions 275 to 297 are purine nucleotide binding; sequence SFLRLGSWNVMMFVTYEQLKRAL. The Mitochondrial intermembrane portion of the chain corresponds to 291 to 308; sequence EQLKRALMKVQVLRESPF.

Belongs to the mitochondrial carrier (TC 2.A.29) family. Interacts with HAX1; the interaction is direct and calcium-dependent.

The protein localises to the mitochondrion inner membrane. In terms of biological role, putative transmembrane transporter that plays a role in mitochondrial metabolism via an as yet unclear mechanism. Originally, this mitochondrial protein was thought to act as a proton transmembrane transporter from the mitochondrial intermembrane space into the matrix, causing proton leaks through the inner mitochondrial membrane, thereby uncoupling mitochondrial membrane potential generation from ATP synthesis. However, this function is controversial and uncoupling may not be the function, or at least not the main function, but rather a consequence of more conventional metabolite transporter activity. This Rattus norvegicus (Rat) protein is Putative mitochondrial transporter UCP3.